Consider the following 196-residue polypeptide: ATP-dependent Clp protease proteolytic subunit (196 aa).

Serine 96 serves as the catalytic Nucleophile. Histidine 121 is a catalytic residue.

Belongs to the peptidase S14 family. Fourteen ClpP subunits assemble into 2 heptameric rings which stack back to back to give a disk-like structure with a central cavity, resembling the structure of eukaryotic proteasomes.

It is found in the cytoplasm. The catalysed reaction is Hydrolysis of proteins to small peptides in the presence of ATP and magnesium. alpha-casein is the usual test substrate. In the absence of ATP, only oligopeptides shorter than five residues are hydrolyzed (such as succinyl-Leu-Tyr-|-NHMec, and Leu-Tyr-Leu-|-Tyr-Trp, in which cleavage of the -Tyr-|-Leu- and -Tyr-|-Trp bonds also occurs).. Functionally, cleaves peptides in various proteins in a process that requires ATP hydrolysis. Has a chymotrypsin-like activity. Plays a major role in the degradation of misfolded proteins. This chain is ATP-dependent Clp protease proteolytic subunit, found in Streptococcus uberis (strain ATCC BAA-854 / 0140J).